Consider the following 472-residue polypeptide: Probable low-salt glycan biosynthesis flippase Agl15 (472 aa).

13 helical membrane passes run Ile8–Phe28, Gly38–Leu58, Ser77–Phe97, Phe109–Val129, Ala164–Ser184, Val209–Phe229, Val244–Ser264, Leu289–Phe309, Ile315–Ile335, Val354–Val374, Gly375–Leu395, Ile408–Leu428, and Leu434–Leu454.

Belongs to the AglR/Agl15 family.

The protein resides in the cell membrane. It participates in protein modification; protein glycosylation. The protein operates within cell surface structure biogenesis; S-layer biogenesis. Its function is as follows. Flippase involved in N-glycan biosynthetic pathway that takes place under low-salt conditions (1.75 M instead of 3.4 M). Participates in the formation of the tetrasaccharide present at 'Asn-532' of S-layer glycoprotein Csg, consisting of a sulfated hexose, 2 hexoses and rhamnose. Probably moves the tetrasaccharide from the cytosolic to the extracytosolic side of the membrane. The chain is Probable low-salt glycan biosynthesis flippase Agl15 (agl15) from Haloferax volcanii (strain ATCC 29605 / DSM 3757 / JCM 8879 / NBRC 14742 / NCIMB 2012 / VKM B-1768 / DS2) (Halobacterium volcanii).